The primary structure comprises 407 residues: Arginine biosynthesis bifunctional protein ArgJ (407 aa).

Positions 157, 183, 194, 280, 402, and 407 each coordinate substrate. Thr-194 acts as the Nucleophile in catalysis.

It belongs to the ArgJ family. In terms of assembly, heterotetramer of two alpha and two beta chains.

The protein resides in the cytoplasm. It catalyses the reaction N(2)-acetyl-L-ornithine + L-glutamate = N-acetyl-L-glutamate + L-ornithine. It carries out the reaction L-glutamate + acetyl-CoA = N-acetyl-L-glutamate + CoA + H(+). Its pathway is amino-acid biosynthesis; L-arginine biosynthesis; L-ornithine and N-acetyl-L-glutamate from L-glutamate and N(2)-acetyl-L-ornithine (cyclic): step 1/1. It participates in amino-acid biosynthesis; L-arginine biosynthesis; N(2)-acetyl-L-ornithine from L-glutamate: step 1/4. Functionally, catalyzes two activities which are involved in the cyclic version of arginine biosynthesis: the synthesis of N-acetylglutamate from glutamate and acetyl-CoA as the acetyl donor, and of ornithine by transacetylation between N(2)-acetylornithine and glutamate. The protein is Arginine biosynthesis bifunctional protein ArgJ of Bacillus cereus (strain ATCC 10987 / NRS 248).